Reading from the N-terminus, the 189-residue chain is Guanylate kinase (189 aa).

Residues Gly-8 to Gly-186 enclose the Guanylate kinase-like domain. Gly-15 to Gly-22 provides a ligand contact to ATP.

This sequence belongs to the guanylate kinase family.

It is found in the cytoplasm. The catalysed reaction is GMP + ATP = GDP + ADP. Its function is as follows. Essential for recycling GMP and indirectly, cGMP. The sequence is that of Guanylate kinase from Prochlorococcus marinus (strain MIT 9313).